Here is a 240-residue protein sequence, read N- to C-terminus: Probable septum site-determining protein MinC (240 aa).

It belongs to the MinC family. Interacts with MinD and FtsZ.

Functionally, cell division inhibitor that blocks the formation of polar Z ring septums. Rapidly oscillates between the poles of the cell to destabilize FtsZ filaments that have formed before they mature into polar Z rings. Prevents FtsZ polymerization. This Aeromonas hydrophila subsp. hydrophila (strain ATCC 7966 / DSM 30187 / BCRC 13018 / CCUG 14551 / JCM 1027 / KCTC 2358 / NCIMB 9240 / NCTC 8049) protein is Probable septum site-determining protein MinC.